The chain runs to 340 residues: Glyceraldehyde-3-phosphate dehydrogenase 2 (340 aa).

Residues 12–13 (RI), arginine 78, and threonine 120 contribute to the NADP(+) site. Residues 151–153 (SCT) and threonine 182 contribute to the D-glyceraldehyde 3-phosphate site. Cysteine 152 functions as the Nucleophile in the catalytic mechanism. Asparagine 183 is a binding site for NADP(+). D-glyceraldehyde 3-phosphate contacts are provided by residues arginine 197, 210–211 (TG), and arginine 233. Asparagine 315 contributes to the NADP(+) binding site.

The protein belongs to the glyceraldehyde-3-phosphate dehydrogenase family. As to quaternary structure, homotetramer. Interacts with BrxC. Post-translationally, in response to oxidative stress, the active site Cys likely reacts with bacillithiol (BSH) to form mixed disulfides to protect the Cys residue against overoxidation. S-bacillithiolation presumably leads to loss of catalytic activity. Debacillithiolation by monothiol bacilliredoxin BrxC restores the activity.

The protein resides in the cytoplasm. It catalyses the reaction D-glyceraldehyde 3-phosphate + phosphate + NADP(+) = (2R)-3-phospho-glyceroyl phosphate + NADPH + H(+). The catalysed reaction is D-glyceraldehyde 3-phosphate + phosphate + NAD(+) = (2R)-3-phospho-glyceroyl phosphate + NADH + H(+). It functions in the pathway carbohydrate biosynthesis; gluconeogenesis. In terms of biological role, involved in the gluconeogenesis. Catalyzes the oxidative phosphorylation of glyceraldehyde 3-phosphate (G3P) to 1,3-bisphosphoglycerate (BPG) using the cofactor NADP. The first reaction step involves the formation of a hemiacetal intermediate between G3P and a cysteine residue, and this hemiacetal intermediate is then oxidized to a thioester, with concomitant reduction of NADP to NADPH. The reduced NADPH is then exchanged with the second NADP, and the thioester is attacked by a nucleophilic inorganic phosphate to produce BPG. The sequence is that of Glyceraldehyde-3-phosphate dehydrogenase 2 from Bacillus subtilis (strain 168).